The chain runs to 140 residues: Hemoglobin subunit beta (140 aa).

Residues 1–140 (GSDLVSGFWG…VGDALAKAYH (140 aa)) form the Globin domain. Heme b contacts are provided by histidine 57 and histidine 86.

The protein belongs to the globin family. In terms of assembly, heterotetramer of two alpha chains and two beta chains. Red blood cells.

Involved in oxygen transport from the lung to the various peripheral tissues. This is Hemoglobin subunit beta (HBB) from Pelophylax lessonae (Pool frog).